The sequence spans 390 residues: Enoyl-[acyl-carrier-protein] reductase [NADH], chloroplastic (390 aa).

A chloroplast-targeting transit peptide spans 1–74 (MAATAASSLQ…CKRPFSFSTR (74 aa)). Residues L53 and N170 each coordinate NADP(+). The Proton donor role is filled by S239. Residues K282 and S314 each coordinate NADP(+). K282 (lowers pKa of active site Tyr) is an active-site residue.

Belongs to the short-chain dehydrogenases/reductases (SDR) family. FabI subfamily. Homotetramer. Expressed in flowers and siliques and at lower levels in roots and leaves (at protein level).

The protein resides in the plastid. Its subcellular location is the chloroplast. It carries out the reaction a 2,3-saturated acyl-[ACP] + NAD(+) = a (2E)-enoyl-[ACP] + NADH + H(+). It functions in the pathway lipid metabolism; fatty acid biosynthesis. Its activity is regulated as follows. Inhibited by the phytotoxin cyperin and the synthetic antimicrobial compound triclosan. In terms of biological role, catalyzes the NAD-dependent reduction of a carbon-carbon double bond in an enoyl moiety that is covalently linked to an acyl carrier protein (ACP). Catalyzes the last reduction step in the de novo synthesis cycle of fatty acids. Involved in the elongation cycle of fatty acids which are used in lipid metabolism. Required for normal plant growth. This chain is Enoyl-[acyl-carrier-protein] reductase [NADH], chloroplastic (MOD1), found in Arabidopsis thaliana (Mouse-ear cress).